The sequence spans 223 residues: Membrane-associated progesterone receptor component 2 (223 aa).

Residues 1 to 33 (MAAGDGDVKLGTLGSGSESSNDGGSESPGDAGA) form a disordered region. O-linked (Xyl...) (chondroitin sulfate) serine glycosylation occurs at Ser-15. Residues 15–33 (SGSESSNDGGSESPGDAGA) show a composition bias toward low complexity. Residues 42 to 66 (AAALALLTGGGEMLLNVALVALVLL) traverse the membrane as a helical segment. Phosphoserine occurs at positions 90, 104, and 208. The Cytochrome b5 heme-binding domain maps to 102 to 201 (DFSLEQLRQY…EKYDYVGRLL (100 aa)). The interval 202-223 (KPGEEPSEYTDEEDTKDHNKQD) is disordered. Residues 206–215 (EPSEYTDEED) are compositionally biased toward acidic residues. Position 210 is a phosphotyrosine (Tyr-210). Thr-211 bears the Phosphothreonine mark.

Belongs to the cytochrome b5 family. MAPR subfamily. As to quaternary structure, interacts with PGRMC1. Interacts with AAAS. As to expression, expressed by endometrial glands and stroma (at protein level). Detected in urine (at protein level).

Its subcellular location is the membrane. It is found in the nucleus envelope. The protein resides in the endoplasmic reticulum. The protein localises to the secreted. Functionally, required for the maintenance of uterine histoarchitecture and normal female reproductive lifespan. May serve as a universal non-classical progesterone receptor in the uterus. Intracellular heme chaperone required for delivery of labile, or signaling heme, to the nucleus. Plays a role in adipocyte function and systemic glucose homeostasis. In brown fat, which has a high demand for heme, delivery of labile heme in the nucleus regulates the activity of heme-responsive transcriptional repressors such as NR1D1 and BACH1. The polypeptide is Membrane-associated progesterone receptor component 2 (Homo sapiens (Human)).